The chain runs to 132 residues: CLAVATA3/ESR (CLE)-related protein TDIF (132 aa).

A signal peptide spans 1-26 (MDIDLLWSFGGWFFILFPETINYCMA). Residues 42–62 (SCSSLFFVALLIITILITMLQ) form a helical membrane-spanning segment. Positions 68 to 77 (EVTSLPTHQP) are enriched in polar residues. The segment at 68–132 (EVTSLPTHQP…PSGPNPISNR (65 aa)) is disordered. Residues 87–96 (STSSTATTTT) are compositionally biased toward low complexity. Residues 101-111 (KRTHHQSHPKP) show a composition bias toward basic residues. Residues Pro123 and Pro126 each carry the hydroxyproline modification. The O-linked (Ara...) hydroxyproline glycan is linked to Pro126.

Belongs to the CLV3/ESR signal peptide family. In terms of assembly, interacts specifically with the leucine-rich repeat receptor-like protein kinase TDR. In terms of processing, the TDIFp peptide contains two hydroxprolines, but hydroxylation had no direct effect on TDIFp activity. Post-translationally, the O-glycosylation (arabinosylation) of the hydroxyproline Pro-126 enhances binding affinity of the TDIFp peptide for its receptor.

It localises to the secreted. Its subcellular location is the extracellular space. It is found in the cell membrane. Extracellular signal peptide that regulates cell fate. Represses tracheary element differentiation but promotes the formation of procambial cells adjacent to phloem cells in the veins. This chain is CLAVATA3/ESR (CLE)-related protein TDIF, found in Zinnia elegans (Garden zinnia).